Reading from the N-terminus, the 523-residue chain is Maintenance of mitochondrial morphology protein 1 (523 aa).

Topologically, residues 1 to 43 (MAGSTSASLQTPYFPSSTQINPVRVDHTLPLPPSQPSLSFTQG) are lumenal. The helical transmembrane segment at 44 to 64 (LLVGQLSVVLLIGAFIKFFIF) threads the bilayer. At 65 to 523 (GEAPPPPSRG…GSMPDTVTET (459 aa)) the chain is on the cytoplasmic side. Disordered stretches follow at residues 70–118 (PPSR…SSST), 128–147 (YYSA…RLYH), 295–349 (TSDQ…SKHG), 420–474 (RTGL…DRGL), and 492–523 (GGHQ…VTET). 2 stretches are compositionally biased toward polar residues: residues 74-96 (GLSN…TDSS) and 105-118 (STSN…SSST). Positions 137–147 (TPKHGRPRLYH) are enriched in basic residues. Positions 151-412 (QPESLDWFNV…EPRVQVVGLP (262 aa)) constitute an SMP-LTD domain. Residues 295–312 (TSDQTMSPIPTPHDTTSE) are compositionally biased toward polar residues. The segment covering 449–468 (GVSGGGGSGGGSGGGGGGMR) has biased composition (gly residues).

This sequence belongs to the MMM1 family. Homodimer. Component of the ER-mitochondria encounter structure (ERMES) or MDM complex, composed of MMM1, MDM10, MDM12 and MDM34. An MMM1 homodimer associates with one molecule of MDM12 on each side in a pairwise head-to-tail manner, and the SMP-LTD domains of MMM1 and MDM12 generate a continuous hydrophobic tunnel for phospholipid trafficking.

The protein resides in the endoplasmic reticulum membrane. In terms of biological role, component of the ERMES/MDM complex, which serves as a molecular tether to connect the endoplasmic reticulum (ER) and mitochondria. Components of this complex are involved in the control of mitochondrial shape and protein biogenesis, and function in nonvesicular lipid trafficking between the ER and mitochondria. The MDM12-MMM1 subcomplex functions in the major beta-barrel assembly pathway that is responsible for biogenesis of all outer membrane beta-barrel proteins, and acts in a late step after the SAM complex. The MDM10-MDM12-MMM1 subcomplex further acts in the TOM40-specific pathway after the action of the MDM12-MMM1 complex. Essential for establishing and maintaining the structure of mitochondria and maintenance of mtDNA nucleoids. The polypeptide is Maintenance of mitochondrial morphology protein 1 (Paracoccidioides lutzii (strain ATCC MYA-826 / Pb01) (Paracoccidioides brasiliensis)).